Consider the following 251-residue polypeptide: 2,3-bisphosphoglycerate-dependent phosphoglycerate mutase (251 aa).

Residues 11–18 (RHGESDWN), 24–25 (TG), Arg-63, 90–93 (ERHY), Lys-101, 117–118 (RR), and 184–185 (GN) contribute to the substrate site. His-12 (tele-phosphohistidine intermediate) is an active-site residue. The Proton donor/acceptor role is filled by Glu-90.

This sequence belongs to the phosphoglycerate mutase family. BPG-dependent PGAM subfamily.

The catalysed reaction is (2R)-2-phosphoglycerate = (2R)-3-phosphoglycerate. It functions in the pathway carbohydrate degradation; glycolysis; pyruvate from D-glyceraldehyde 3-phosphate: step 3/5. Its function is as follows. Catalyzes the interconversion of 2-phosphoglycerate and 3-phosphoglycerate. The protein is 2,3-bisphosphoglycerate-dependent phosphoglycerate mutase of Mycobacterium ulcerans (strain Agy99).